Here is a 161-residue protein sequence, read N- to C-terminus: MLILDRSSPQIFISNEQQDVSIDLQSAQRLVVLFLELQKVSTDQVYVYFLDDTALAQLHDEQFSDPSPTDTITLPIDKPGIASFPHVLGEAFVSPKAAMRFLEQYTEDQLYHEISRYVVHSLLHMLGYDDQTDEDKRIMQEQEDVSLSFLAEHQALLRPAV.

3 residues coordinate Zn(2+): His120, His124, and Asp130.

The protein belongs to the endoribonuclease YbeY family. Zn(2+) is required as a cofactor.

Its subcellular location is the cytoplasm. Single strand-specific metallo-endoribonuclease involved in late-stage 70S ribosome quality control and in maturation of the 3' terminus of the 16S rRNA. The protein is Endoribonuclease YbeY of Chlamydia trachomatis serovar A (strain ATCC VR-571B / DSM 19440 / HAR-13).